The sequence spans 614 residues: UvrABC system protein C (614 aa).

One can recognise a GIY-YIG domain in the interval 25–103 (SVPGVYKMFG…IKSLKPKYNI (79 aa)). The region spanning 214-249 (KEIQCELFEMMCRFSNNQDYESAIVCRDRLHALKSM) is the UVR domain.

The protein belongs to the UvrC family. In terms of assembly, interacts with UvrB in an incision complex.

The protein localises to the cytoplasm. Its function is as follows. The UvrABC repair system catalyzes the recognition and processing of DNA lesions. UvrC both incises the 5' and 3' sides of the lesion. The N-terminal half is responsible for the 3' incision and the C-terminal half is responsible for the 5' incision. This Anaplasma phagocytophilum (strain HZ) protein is UvrABC system protein C.